Consider the following 341-residue polypeptide: Ribosomal RNA small subunit methyltransferase H (341 aa).

S-adenosyl-L-methionine contacts are provided by residues 47-49 (GGY), Asp-64, Phe-91, Asp-109, and Gln-116.

It belongs to the methyltransferase superfamily. RsmH family.

It localises to the cytoplasm. The enzyme catalyses cytidine(1402) in 16S rRNA + S-adenosyl-L-methionine = N(4)-methylcytidine(1402) in 16S rRNA + S-adenosyl-L-homocysteine + H(+). Functionally, specifically methylates the N4 position of cytidine in position 1402 (C1402) of 16S rRNA. This Rhizobium johnstonii (strain DSM 114642 / LMG 32736 / 3841) (Rhizobium leguminosarum bv. viciae) protein is Ribosomal RNA small subunit methyltransferase H.